Reading from the N-terminus, the 40-residue chain is Large ribosomal subunit protein bL36A (40 aa).

This sequence belongs to the bacterial ribosomal protein bL36 family.

The protein is Large ribosomal subunit protein bL36A of Kineococcus radiotolerans (strain ATCC BAA-149 / DSM 14245 / SRS30216).